Here is a 131-residue protein sequence, read N- to C-terminus: PDZ domain-containing protein C52A11.3 (131 aa).

The PDZ domain maps to 51 to 127; it reads LVKLQKDANR…RLYLQIARPH (77 aa).

The chain is PDZ domain-containing protein C52A11.3 from Caenorhabditis elegans.